The following is a 409-amino-acid chain: ATPase ASNA1 homolog (409 aa).

Position 21-28 (21-28 (KGGVGKTT)) interacts with ATP. The active site involves aspartate 62. 2 residues coordinate ATP: glutamate 303 and asparagine 330. Residues cysteine 342 and cysteine 345 each coordinate Zn(2+).

It belongs to the arsA ATPase family. As to quaternary structure, homodimer.

It is found in the cytoplasm. The protein localises to the endoplasmic reticulum. Its function is as follows. ATPase required for the post-translational delivery of tail-anchored (TA) proteins to the endoplasmic reticulum. Recognizes and selectively binds the transmembrane domain of TA proteins in the cytosol. This complex then targets to the endoplasmic reticulum by membrane-bound receptors, where the tail-anchored protein is released for insertion. This process is regulated by ATP binding and hydrolysis. ATP binding drives the homodimer towards the closed dimer state, facilitating recognition of newly synthesized TA membrane proteins. ATP hydrolysis is required for insertion. Subsequently, the homodimer reverts towards the open dimer state, lowering its affinity for the membrane-bound receptor, and returning it to the cytosol to initiate a new round of targeting. This Leishmania infantum protein is ATPase ASNA1 homolog.